The sequence spans 369 residues: Actin-related protein 2/3 complex subunit 1B-A (369 aa).

WD repeat units lie at residues 6 to 45 (FLLE…WSKI), 50 to 89 (EHNG…WKPT), 94 to 135 (RINR…WVCK), 140 to 179 (PIRS…VEER), 200 to 239 (SSCG…RVTS), 242 to 282 (TDTL…LSFG), and 321 to 364 (LHKN…SAMK).

The protein belongs to the WD repeat ARPC1 family. In terms of assembly, component of the Arp2/3 complex composed of actr2/arp2, actr3/arp3, arpc1 (arpc1a or arpc1b), arpc2, arpc3, arpc4 and arpc5.

Its subcellular location is the cytoplasm. It localises to the cytoskeleton. It is found in the nucleus. In terms of biological role, component of the Arp2/3 complex, a multiprotein complex that mediates actin polymerization upon stimulation by nucleation-promoting factor (NPF). The Arp2/3 complex mediates the formation of branched actin networks in the cytoplasm, providing the force for cell motility. In addition to its role in the cytoplasmic cytoskeleton, the Arp2/3 complex also promotes actin polymerization in the nucleus, thereby regulating gene transcription and repair of damaged DNA. The Arp2/3 complex promotes homologous recombination (HR) repair in response to DNA damage by promoting nuclear actin polymerization, leading to drive motility of double-strand breaks (DSBs). In Xenopus laevis (African clawed frog), this protein is Actin-related protein 2/3 complex subunit 1B-A (arpc1b-a).